The chain runs to 614 residues: Protein YehQ (614 aa).

SWIM-type zinc fingers lie at residues 55–89 (VRTQ…LSYQ) and 151–185 (SDVR…QAFV).

This Escherichia coli (strain K12) protein is Protein YehQ (yehQ).